The primary structure comprises 279 residues: Epidermal growth factor-like protein 7 (279 aa).

Positions 1–21 (MWGSGELLVAWFLVLAAGGTT) are cleaved as a signal peptide. Positions 28–109 (SRRVCTVGVS…TNGLPGACGA (82 aa)) constitute an EMI domain. Disulfide bonds link cysteine 32-cysteine 94, cysteine 57-cysteine 63, cysteine 93-cysteine 107, cysteine 112-cysteine 122, cysteine 116-cysteine 128, cysteine 130-cysteine 139, cysteine 146-cysteine 157, cysteine 153-cysteine 166, and cysteine 168-cysteine 181. Positions 108 to 140 (GAAICQPPCGNEGSCIRPGRCRCPVGWQGDTCQ) constitute an EGF-like 1 domain. The short motif at 131–133 (PVG) is the Cell attachment site element. The EGF-like 2; calcium-binding domain maps to 142 to 182 (DVDECSTGEARCPQRCVNTVGSYWCQCWEGQSPSADGVLCL). Coiled-coil stretches lie at residues 200–224 (SVVR…QLVL) and 250–274 (FQQL…GSCS).

Interacts with ITGAV/ITGB3 in an RGD-dependent manner, increasing endothelial cell's motility.

It is found in the secreted. It localises to the extracellular space. Its function is as follows. Regulates vascular tubulogenesis in vivo. Inhibits platelet-derived growth factor (PDGF)-BB-induced smooth muscle cell migration and promotes endothelial cell adhesion to the extracellular matrix and angiogenesis. The sequence is that of Epidermal growth factor-like protein 7 (Egfl7) from Rattus norvegicus (Rat).